A 77-amino-acid chain; its full sequence is Blood-induced peptide 1 (77 aa).

Positions E38–N71 form a coiled coil.

In terms of biological role, plays an important role in survival in host blood through increasing tolerance to stresses such as heat, salt, or cycloheximide, which is essential for virulence. This is Blood-induced peptide 1 from Candida albicans (strain SC5314 / ATCC MYA-2876) (Yeast).